A 230-amino-acid polypeptide reads, in one-letter code: Demethylmenaquinone methyltransferase (230 aa).

S-adenosyl-L-methionine contacts are provided by residues T62, D80, 100-101 (DG), and S117.

This sequence belongs to the class I-like SAM-binding methyltransferase superfamily. MenG/UbiE family.

The catalysed reaction is a 2-demethylmenaquinol + S-adenosyl-L-methionine = a menaquinol + S-adenosyl-L-homocysteine + H(+). It functions in the pathway quinol/quinone metabolism; menaquinone biosynthesis; menaquinol from 1,4-dihydroxy-2-naphthoate: step 2/2. Its function is as follows. Methyltransferase required for the conversion of demethylmenaquinol (DMKH2) to menaquinol (MKH2). This chain is Demethylmenaquinone methyltransferase, found in Corynebacterium efficiens (strain DSM 44549 / YS-314 / AJ 12310 / JCM 11189 / NBRC 100395).